We begin with the raw amino-acid sequence, 240 residues long: Dihydromonapterin reductase (240 aa).

Residue Tyr152 is the Proton acceptor of the active site.

This sequence belongs to the short-chain dehydrogenases/reductases (SDR) family. FolM subfamily.

The catalysed reaction is (6S)-5,6,7,8-tetrahydrofolate + NADP(+) = 7,8-dihydrofolate + NADPH + H(+). It catalyses the reaction 7,8-dihydromonapterin + NADPH + H(+) = 5,6,7,8-tetrahydromonapterin + NADP(+). Functionally, catalyzes the reduction of dihydromonapterin to tetrahydromonapterin. Also has lower activity with dihydrofolate. The protein is Dihydromonapterin reductase (folM) of Escherichia coli O6:K15:H31 (strain 536 / UPEC).